We begin with the raw amino-acid sequence, 451 residues long: Probable phosphoglucosamine mutase (451 aa).

S96 acts as the Phosphoserine intermediate in catalysis. Mg(2+)-binding residues include S96, D233, D235, and D237. Position 96 is a phosphoserine (S96).

The protein belongs to the phosphohexose mutase family. It depends on Mg(2+) as a cofactor. In terms of processing, activated by phosphorylation.

The catalysed reaction is alpha-D-glucosamine 1-phosphate = D-glucosamine 6-phosphate. Its function is as follows. Catalyzes the conversion of glucosamine-6-phosphate to glucosamine-1-phosphate. The sequence is that of Probable phosphoglucosamine mutase from Pyrococcus abyssi (strain GE5 / Orsay).